A 360-amino-acid polypeptide reads, in one-letter code: DNA replication and repair protein RecF (360 aa).

30–37 (GENGAGKT) lines the ATP pocket.

The protein belongs to the RecF family.

It is found in the cytoplasm. Functionally, the RecF protein is involved in DNA metabolism; it is required for DNA replication and normal SOS inducibility. RecF binds preferentially to single-stranded, linear DNA. It also seems to bind ATP. This is DNA replication and repair protein RecF from Deinococcus deserti (strain DSM 17065 / CIP 109153 / LMG 22923 / VCD115).